The chain runs to 382 residues: Fetuin-B (382 aa).

An N-terminal signal peptide occupies residues 1–15 (MGLLLPLALCILVLC). 2 consecutive Cystatin fetuin-B-type domains span residues 25 to 138 (ALNP…YNCT) and 149 to 255 (MTCP…VTCD). The N-linked (GlcNAc...) asparagine glycan is linked to asparagine 37. Intrachain disulfides connect cysteine 93/cysteine 104, cysteine 117/cysteine 137, and cysteine 151/cysteine 154. A glycan (N-linked (GlcNAc...) asparagine) is linked at asparagine 136. The N-linked (GlcNAc...) asparagine glycan is linked to asparagine 182. 2 disulfides stabilise this stretch: cysteine 216–cysteine 224 and cysteine 237–cysteine 254. Polar residues-rich tracts occupy residues 262–276 (PATG…QKPT) and 286–295 (QKNTPPTDSP). Disordered stretches follow at residues 262 to 320 (PATG…EKGP) and 363 to 382 (ARTA…VLPP). 2 O-linked (GalNAc...) threonine glycosylation sites follow: threonine 289 and threonine 292. Over residues 310–320 (LDDKNSQEKGP) the composition is skewed to basic and acidic residues. At serine 315 the chain carries Phosphoserine.

The protein belongs to the fetuin family. As to expression, liver and testis.

The protein resides in the secreted. Protease inhibitor required for egg fertilization. Required to prevent premature zona pellucida hardening before fertilization, probably by inhibiting the protease activity of ASTL, a protease that mediates the cleavage of ZP2 and triggers zona pellucida hardening. The chain is Fetuin-B (FETUB) from Homo sapiens (Human).